The following is a 439-amino-acid chain: Adenylosuccinate synthetase (439 aa).

Residues glycine 13 to lysine 19 and glycine 41 to threonine 43 contribute to the GTP site. Aspartate 14 acts as the Proton acceptor in catalysis. Mg(2+) is bound by residues aspartate 14 and glycine 41. IMP contacts are provided by residues aspartate 14–lysine 17, asparagine 39–histidine 42, threonine 130, arginine 144, glutamine 226, threonine 241, and arginine 313. Histidine 42 functions as the Proton donor in the catalytic mechanism. Alanine 309–arginine 315 contributes to the substrate binding site. Residues arginine 315, lysine 341–aspartate 343, and serine 422–glycine 424 contribute to the GTP site.

It belongs to the adenylosuccinate synthetase family. Homodimer. Requires Mg(2+) as cofactor.

The protein resides in the cytoplasm. It carries out the reaction IMP + L-aspartate + GTP = N(6)-(1,2-dicarboxyethyl)-AMP + GDP + phosphate + 2 H(+). The protein operates within purine metabolism; AMP biosynthesis via de novo pathway; AMP from IMP: step 1/2. Plays an important role in the de novo pathway of purine nucleotide biosynthesis. Catalyzes the first committed step in the biosynthesis of AMP from IMP. In Acinetobacter baylyi (strain ATCC 33305 / BD413 / ADP1), this protein is Adenylosuccinate synthetase.